The following is a 29-amino-acid chain: Cyclotide mang-A (29 aa).

Positions 1–29 (GFPTCGETCTLGTCNTPGCTCSWPICTRD) form a cross-link, cyclopeptide (Gly-Asp). Disulfide bonds link Cys-5–Cys-19, Cys-9–Cys-21, and Cys-14–Cys-26.

The protein belongs to the cyclotide family. Moebius subfamily. This is a cyclic peptide.

In terms of biological role, probably participates in a plant defense mechanism. This is Cyclotide mang-A from Melicytus angustifolius (Hymenanthera angustifolia).